Reading from the N-terminus, the 104-residue chain is Co-chaperonin GroES 1 (104 aa).

It belongs to the GroES chaperonin family. Heptamer of 7 subunits arranged in a ring. Interacts with the chaperonin GroEL.

It is found in the cytoplasm. Its function is as follows. Together with the chaperonin GroEL, plays an essential role in assisting protein folding. The GroEL-GroES system forms a nano-cage that allows encapsulation of the non-native substrate proteins and provides a physical environment optimized to promote and accelerate protein folding. GroES binds to the apical surface of the GroEL ring, thereby capping the opening of the GroEL channel. The chain is Co-chaperonin GroES 1 from Mesorhizobium japonicum (strain LMG 29417 / CECT 9101 / MAFF 303099) (Mesorhizobium loti (strain MAFF 303099)).